A 252-amino-acid chain; its full sequence is Adenosylcobinamide-GDP ribazoletransferase (252 aa).

A run of 6 helical transmembrane segments spans residues 29-49 (LYWFPFVGLLLGALLAALGYV), 50-70 (GSLSGWHEFAALLVVLGGIVL), 104-124 (VGSFGALALSGVMLLKWVAVV), 129-149 (FGLFDVVMAGILLARLVQVLL), 166-186 (FVAGAGAPHAFSALLFTLALL), and 194-214 (FPTMLWLLGAALVAGSMVGMV).

The protein belongs to the CobS family. Mg(2+) is required as a cofactor.

It localises to the cell inner membrane. It catalyses the reaction alpha-ribazole + adenosylcob(III)inamide-GDP = adenosylcob(III)alamin + GMP + H(+). The enzyme catalyses alpha-ribazole 5'-phosphate + adenosylcob(III)inamide-GDP = adenosylcob(III)alamin 5'-phosphate + GMP + H(+). The protein operates within cofactor biosynthesis; adenosylcobalamin biosynthesis; adenosylcobalamin from cob(II)yrinate a,c-diamide: step 7/7. Functionally, joins adenosylcobinamide-GDP and alpha-ribazole to generate adenosylcobalamin (Ado-cobalamin). Also synthesizes adenosylcobalamin 5'-phosphate from adenosylcobinamide-GDP and alpha-ribazole 5'-phosphate. The protein is Adenosylcobinamide-GDP ribazoletransferase of Chlorobium chlorochromatii (strain CaD3).